A 747-amino-acid chain; its full sequence is MIIGIMKTFLLTICFLSVQTGMVAIAQDKEQTPVYLDDTQPIEVRVQDALNRMTVEEKTRLSYAQGKFSSPGCPRLGIPELWMSDGPHGVRAEINWNDWGYAGWTNDSCTAFPALTCLAASWNPLLAAKYGYAIGEEARYREKDVLLGPGVNIYRTPLNGRNFEYMGEDPYLASELCVPYIQGVQKNGVAACVKHYALNNQELWRGHIDVQLSDRALYEIYLPAFKAAVERGKAWSIMGAYNKVRGTHATHHKLLNNDILKGEWNFDGCVITDWGAAHDTYEAAMYGLDIEMGSYTNGLTSESEFGYDDYYLGKSYLKMVREGKIPMEVVNDKAARVLRLIFRTAMNRRKPFGALTSEEHYRTAYEIATEGIVLLKNGTGKKQPALLPVPQGKYKRILVVGDNATRNLMLGGGSSELKVQKVISSLDGIKAKFGDGVVYAQGYTSGRPMYGRADVIPQVTVDSLRNDAVEKAMNSDLVIFVGGLNKNHFQDCEGGDRLSYELPFAQNELIEALLKVNKNLVAVIVSGNAVEMPWVKEIPSIVQSWYLGSVGGEALADVLSGEVTPSGKLPFSYPVKLEDCPAHFFGEISYPGDSIRQEYKEDILVGYRWYDTKKVQPLFPFGYGMSYTTFEYSKPVISAQTMNTDGSIDVSVKVKNTGKVAGKEIIQLYIGDEECSVLRPVKELKDFRKVQLLPNEEKEVKFTIKPEALQFFDDKQRTWVAEPGKFKAYIAASSSDIRGTVTFEYIQ.

The N-terminal stretch at 1 to 26 (MIIGIMKTFLLTICFLSVQTGMVAIA) is a signal peptide. The active site involves Asp273.

It belongs to the glycosyl hydrolase 3 family.

It is found in the periplasm. It carries out the reaction Hydrolysis of terminal, non-reducing beta-D-glucosyl residues with release of beta-D-glucose.. It functions in the pathway glucan metabolism; xyloglucan degradation. Functionally, catalyzes the hydrolysis of terminal, non-reducing beta-D-glucosyl residues with release of beta-D-glucose in xyloglucan degradation, leading to remove the backbone 'G' units. In Bacteroides ovatus (strain ATCC 8483 / DSM 1896 / JCM 5824 / BCRC 10623 / CCUG 4943 / NCTC 11153), this protein is Beta-glucosidase BoGH3A.